The primary structure comprises 21 residues: Tricyclic peptide MS-271 (21 aa).

The 3-cysteinyl-aspartic acid (Cys-Asp) cross-link spans C1–D9. 2 cysteine pairs are disulfide-bonded: C1–C13 and C7–C19. W21 carries the post-translational modification D-tryptophan.

Inhibits chicken myosin light chain kinase with an IC(50) of 8 M. Does not inhibit bovine cAMP-dependent protein kinase or rat protein kinase C. Antibacterial activity against the Gram-positive bacteria B.subtilis, E.faecium and S.aureus. No antibacterial activity against the Gram-negative bacteria E.coli, K.pneumoniae, P.aeruginosa, P.vulgaris, S.sonnei and S.typhosa. No antifungal activity against C.albicans. In Streptomyces sp, this protein is Tricyclic peptide MS-271.